The chain runs to 410 residues: S-adenosylmethionine synthase (410 aa).

His-21 lines the ATP pocket. Asp-23 provides a ligand contact to Mg(2+). Residue Glu-49 coordinates K(+). Positions 62 and 105 each coordinate L-methionine. The interval Gln-105–Gln-115 is flexible loop. Residues Gln-107–Ala-133 form a disordered region. ATP contacts are provided by residues Asp-180–Lys-182, Asp-261, Arg-267–Lys-268, Ala-284, and Lys-288. Position 261 (Asp-261) interacts with L-methionine. An L-methionine-binding site is contributed by Lys-292.

The protein belongs to the AdoMet synthase family. Homotetramer; dimer of dimers. Mg(2+) is required as a cofactor. K(+) serves as cofactor.

Its subcellular location is the cytoplasm. It catalyses the reaction L-methionine + ATP + H2O = S-adenosyl-L-methionine + phosphate + diphosphate. It participates in amino-acid biosynthesis; S-adenosyl-L-methionine biosynthesis; S-adenosyl-L-methionine from L-methionine: step 1/1. Its function is as follows. Catalyzes the formation of S-adenosylmethionine (AdoMet) from methionine and ATP. The overall synthetic reaction is composed of two sequential steps, AdoMet formation and the subsequent tripolyphosphate hydrolysis which occurs prior to release of AdoMet from the enzyme. The polypeptide is S-adenosylmethionine synthase (Corynebacterium diphtheriae (strain ATCC 700971 / NCTC 13129 / Biotype gravis)).